The sequence spans 1059 residues: Carbamoyl phosphate synthase large chain (1059 aa).

The interval 1 to 401 (MPKRSDIKKI…SLLKACRSLE (401 aa)) is carboxyphosphate synthetic domain. Arg-129, Arg-169, Gly-175, Gly-176, Arg-208, Ile-210, Glu-215, Gly-241, Ile-242, His-243, Gln-284, and Glu-298 together coordinate ATP. The ATP-grasp 1 domain occupies 133 to 327 (KQLMEELEQP…IAKLAAKIAV (195 aa)). Mg(2+)-binding residues include Gln-284, Glu-298, and Asn-300. The Mn(2+) site is built by Gln-284, Glu-298, and Asn-300. Residues 402 to 546 (IGVYHNEMSE…YSTYEWENES (145 aa)) are oligomerization domain. Residues 547–929 (IKSDKESVIV…ALYKAFEASY (383 aa)) are carbamoyl phosphate synthetic domain. Residues 671–861 (EQALKDLDIP…MAQVATNLIL (191 aa)) enclose the ATP-grasp 2 domain. The ATP site is built by Arg-707, Ser-746, Ile-748, Glu-752, Gly-777, Val-778, His-779, Ser-780, Gln-820, and Glu-832. Mg(2+)-binding residues include Gln-820, Glu-832, and Asn-834. The Mn(2+) site is built by Gln-820, Glu-832, and Asn-834. One can recognise an MGS-like domain in the interval 930–1059 (LHLPTFGNVI…ESRSFTTEAI (130 aa)). The tract at residues 930 to 1059 (LHLPTFGNVI…ESRSFTTEAI (130 aa)) is allosteric domain.

Belongs to the CarB family. In terms of assembly, composed of two chains; the small (or glutamine) chain promotes the hydrolysis of glutamine to ammonia, which is used by the large (or ammonia) chain to synthesize carbamoyl phosphate. Tetramer of heterodimers (alpha,beta)4. Mg(2+) is required as a cofactor. The cofactor is Mn(2+).

The enzyme catalyses hydrogencarbonate + L-glutamine + 2 ATP + H2O = carbamoyl phosphate + L-glutamate + 2 ADP + phosphate + 2 H(+). It catalyses the reaction hydrogencarbonate + NH4(+) + 2 ATP = carbamoyl phosphate + 2 ADP + phosphate + 2 H(+). Its pathway is amino-acid biosynthesis; L-arginine biosynthesis; carbamoyl phosphate from bicarbonate: step 1/1. It functions in the pathway pyrimidine metabolism; UMP biosynthesis via de novo pathway; (S)-dihydroorotate from bicarbonate: step 1/3. Large subunit of the glutamine-dependent carbamoyl phosphate synthetase (CPSase). CPSase catalyzes the formation of carbamoyl phosphate from the ammonia moiety of glutamine, carbonate, and phosphate donated by ATP, constituting the first step of 2 biosynthetic pathways, one leading to arginine and/or urea and the other to pyrimidine nucleotides. The large subunit (synthetase) binds the substrates ammonia (free or transferred from glutamine from the small subunit), hydrogencarbonate and ATP and carries out an ATP-coupled ligase reaction, activating hydrogencarbonate by forming carboxy phosphate which reacts with ammonia to form carbamoyl phosphate. The polypeptide is Carbamoyl phosphate synthase large chain (Streptococcus thermophilus (strain ATCC BAA-250 / LMG 18311)).